The chain runs to 229 residues: GTP cyclohydrolase 1 (229 aa).

The interval 1 to 21 is disordered; that stretch reads MTLAKPGSGSQSRMDDKAHFK. Zn(2+) is bound by residues Cys-116, His-119, and Cys-187.

Belongs to the GTP cyclohydrolase I family. Toroid-shaped homodecamer, composed of two pentamers of five dimers.

It catalyses the reaction GTP + H2O = 7,8-dihydroneopterin 3'-triphosphate + formate + H(+). The protein operates within cofactor biosynthesis; 7,8-dihydroneopterin triphosphate biosynthesis; 7,8-dihydroneopterin triphosphate from GTP: step 1/1. The polypeptide is GTP cyclohydrolase 1 (Synechococcus sp. (strain JA-2-3B'a(2-13)) (Cyanobacteria bacterium Yellowstone B-Prime)).